The chain runs to 341 residues: uncharacterized protein (341 aa).

WD repeat units lie at residues 19–59 (SLGS…QVHT), 106–145 (GHTDIVSSIEVSPIEDQFVSTANDKTLKLWKMNQSSRCLG), 252–293 (PFSN…HHKG), and 303–341 (VSQSIINPGLVKYNPRYDQLLTAGSQLVFWLPEKYALTS).

The protein resides in the cytoplasm. Its subcellular location is the nucleus. This is an uncharacterized protein from Schizosaccharomyces pombe (strain 972 / ATCC 24843) (Fission yeast).